A 219-amino-acid polypeptide reads, in one-letter code: Adenylate kinase (219 aa).

13 to 18 lines the ATP pocket; the sequence is GAGKGT. An NMP region spans residues 33–62; it reads STGDIFRAAIKNETKMGLEAKKYIDAGNLV. AMP contacts are provided by residues T34, R39, 60–62, 88–91, and Q95; these read NLV and GYPR. Positions 129–167 are LID; the sequence is GRFICRTCGATYHKLYNKPKVEGTCDVCGGHDFYQRDDD. ATP is bound at residue R130. Residues C133 and C136 each coordinate Zn(2+). 139 to 140 lines the ATP pocket; sequence TY. Zn(2+) is bound by residues C153 and C156. AMP contacts are provided by R164 and R175. Position 203 (R203) interacts with ATP.

This sequence belongs to the adenylate kinase family. As to quaternary structure, monomer.

It is found in the cytoplasm. It carries out the reaction AMP + ATP = 2 ADP. The protein operates within purine metabolism; AMP biosynthesis via salvage pathway; AMP from ADP: step 1/1. Its function is as follows. Catalyzes the reversible transfer of the terminal phosphate group between ATP and AMP. Plays an important role in cellular energy homeostasis and in adenine nucleotide metabolism. This Lactiplantibacillus plantarum (strain ATCC BAA-793 / NCIMB 8826 / WCFS1) (Lactobacillus plantarum) protein is Adenylate kinase.